Consider the following 648-residue polypeptide: Centrosomal protein of 63 kDa-B (648 aa).

Coiled coils occupy residues 19–188 (DSCE…QSHN) and 222–555 (EEEL…DAAS). Position 559 is a phosphoserine; by atm and atr (Ser-559). Positions 611–644 (FLQEEEQRSHELLQRLNAHIEELKQESQRTVEHF) form a coiled coil.

Belongs to the CEP63 family. Post-translationally, phosphorylation at Ser-559 by atm and atr promotes its delocalization from the centrosome and impairs its ability to promote centrosome dependent spindle assembly.

It is found in the cytoplasm. Its subcellular location is the cytoskeleton. The protein resides in the microtubule organizing center. It localises to the centrosome. The protein localises to the centriole. Required for normal spindle assembly. Plays a key role in mother-centriole-dependent centriole duplication. Plays a role in DNA damage response. Following DNA damage, such as double-strand breaks (DSBs), is removed from centrosomes; this leads to the inactivation of spindle assembly and delay in mitotic progression. The chain is Centrosomal protein of 63 kDa-B (cep63-b) from Xenopus laevis (African clawed frog).